A 240-amino-acid polypeptide reads, in one-letter code: Probable septum site-determining protein MinC (240 aa).

Belongs to the MinC family. Interacts with MinD and FtsZ.

Its function is as follows. Cell division inhibitor that blocks the formation of polar Z ring septums. Rapidly oscillates between the poles of the cell to destabilize FtsZ filaments that have formed before they mature into polar Z rings. Prevents FtsZ polymerization. The protein is Probable septum site-determining protein MinC of Acinetobacter baylyi (strain ATCC 33305 / BD413 / ADP1).